We begin with the raw amino-acid sequence, 153 residues long: Small ribosomal subunit protein uS7c (153 aa).

This sequence belongs to the universal ribosomal protein uS7 family. Part of the 30S ribosomal subunit.

The protein resides in the plastid. Its function is as follows. One of the primary rRNA binding proteins, it binds directly to 16S rRNA where it nucleates assembly of the head domain of the 30S subunit. This Helicosporidium sp. subsp. Simulium jonesii (Green alga) protein is Small ribosomal subunit protein uS7c (rps7).